The following is a 206-amino-acid chain: Large ribosomal subunit protein uL3 (206 aa).

The disordered stretch occupies residues 122–154 (VVKRHGHAGGPGGHGSRFHRHPGSMGANSTPSR).

This sequence belongs to the universal ribosomal protein uL3 family. In terms of assembly, part of the 50S ribosomal subunit. Forms a cluster with proteins L14 and L19.

One of the primary rRNA binding proteins, it binds directly near the 3'-end of the 23S rRNA, where it nucleates assembly of the 50S subunit. The protein is Large ribosomal subunit protein uL3 of Leptospira borgpetersenii serovar Hardjo-bovis (strain JB197).